The primary structure comprises 504 residues: Cystathionine beta-synthase (504 aa).

Positions 12 and 23 each coordinate heme. Lysine 78 carries the post-translational modification N6-(pyridoxal phosphate)lysine. Pyridoxal 5'-phosphate contacts are provided by residues asparagine 108, 215-219 (GTGGT), and serine 307. CBS domains follow at residues 375–434 (LSFD…IVKC) and 442–498 (MVKQ…NGTS).

The protein belongs to the cysteine synthase/cystathionine beta-synthase family. In terms of assembly, homodimer. It depends on pyridoxal 5'-phosphate as a cofactor.

It catalyses the reaction L-homocysteine + L-serine = L,L-cystathionine + H2O. It functions in the pathway amino-acid biosynthesis; L-cysteine biosynthesis; L-cysteine from L-homocysteine and L-serine: step 1/2. Has no response to S-adenosyl-methionine/AdoMet, unlike mammalian orthologs. Binds non-covalently to a heme group that may control the redox sensitivity of the enzyme. Its function is as follows. Hydro-lyase catalyzing the first step of the transsulfuration pathway, where the hydroxyl group of L-serine is displaced by L-homocysteine in a beta-replacement reaction to form L-cystathionine, the precursor of L-cysteine. The polypeptide is Cystathionine beta-synthase (Apis mellifera (Honeybee)).